A 264-amino-acid chain; its full sequence is Hydroxyethylthiazole kinase (264 aa).

Met-43 provides a ligand contact to substrate. ATP-binding residues include Arg-119 and Thr-165. Substrate is bound at residue Gly-192.

Belongs to the Thz kinase family. Mg(2+) serves as cofactor.

The catalysed reaction is 5-(2-hydroxyethyl)-4-methylthiazole + ATP = 4-methyl-5-(2-phosphooxyethyl)-thiazole + ADP + H(+). Its pathway is cofactor biosynthesis; thiamine diphosphate biosynthesis; 4-methyl-5-(2-phosphoethyl)-thiazole from 5-(2-hydroxyethyl)-4-methylthiazole: step 1/1. In terms of biological role, catalyzes the phosphorylation of the hydroxyl group of 4-methyl-5-beta-hydroxyethylthiazole (THZ). In Anoxybacillus flavithermus (strain DSM 21510 / WK1), this protein is Hydroxyethylthiazole kinase.